The following is a 304-amino-acid chain: Coenzyme PQQ synthesis protein B (304 aa).

The protein belongs to the PqqB family.

Its pathway is cofactor biosynthesis; pyrroloquinoline quinone biosynthesis. Functionally, may be involved in the transport of PQQ or its precursor to the periplasm. The polypeptide is Coenzyme PQQ synthesis protein B (Stutzerimonas stutzeri (Pseudomonas stutzeri)).